We begin with the raw amino-acid sequence, 343 residues long: Holliday junction branch migration complex subunit RuvB (343 aa).

A large ATPase domain (RuvB-L) region spans residues 4–193; the sequence is TDNLTAAQPQ…FGIVSRLEFY (190 aa). ATP contacts are provided by residues Leu-32, Arg-33, Gly-74, Lys-77, Thr-78, Thr-79, 140 to 142, Arg-183, Tyr-193, and Arg-230; that span reads EDY. Thr-78 contributes to the Mg(2+) binding site. A small ATPAse domain (RuvB-S) region spans residues 194 to 264; that stretch reads ENRDLTTIVS…VADAALSMLD (71 aa). Positions 267–343 are head domain (RuvB-H); that stretch reads AQGLDVMDRK…YLHFGLPVEK (77 aa). DNA contacts are provided by Arg-322 and Arg-327.

The protein belongs to the RuvB family. In terms of assembly, homohexamer. Forms an RuvA(8)-RuvB(12)-Holliday junction (HJ) complex. HJ DNA is sandwiched between 2 RuvA tetramers; dsDNA enters through RuvA and exits via RuvB. An RuvB hexamer assembles on each DNA strand where it exits the tetramer. Each RuvB hexamer is contacted by two RuvA subunits (via domain III) on 2 adjacent RuvB subunits; this complex drives branch migration. In the full resolvosome a probable DNA-RuvA(4)-RuvB(12)-RuvC(2) complex forms which resolves the HJ.

The protein resides in the cytoplasm. The catalysed reaction is ATP + H2O = ADP + phosphate + H(+). In terms of biological role, the RuvA-RuvB-RuvC complex processes Holliday junction (HJ) DNA during genetic recombination and DNA repair, while the RuvA-RuvB complex plays an important role in the rescue of blocked DNA replication forks via replication fork reversal (RFR). RuvA specifically binds to HJ cruciform DNA, conferring on it an open structure. The RuvB hexamer acts as an ATP-dependent pump, pulling dsDNA into and through the RuvAB complex. RuvB forms 2 homohexamers on either side of HJ DNA bound by 1 or 2 RuvA tetramers; 4 subunits per hexamer contact DNA at a time. Coordinated motions by a converter formed by DNA-disengaged RuvB subunits stimulates ATP hydrolysis and nucleotide exchange. Immobilization of the converter enables RuvB to convert the ATP-contained energy into a lever motion, pulling 2 nucleotides of DNA out of the RuvA tetramer per ATP hydrolyzed, thus driving DNA branch migration. The RuvB motors rotate together with the DNA substrate, which together with the progressing nucleotide cycle form the mechanistic basis for DNA recombination by continuous HJ branch migration. Branch migration allows RuvC to scan DNA until it finds its consensus sequence, where it cleaves and resolves cruciform DNA. In Neisseria gonorrhoeae (strain NCCP11945), this protein is Holliday junction branch migration complex subunit RuvB.